A 183-amino-acid chain; its full sequence is Shikimate kinase (183 aa).

18–23 (GVGKTT) provides a ligand contact to ATP. Thr-22 serves as a coordination point for Mg(2+). Substrate is bound by residues Asp-40, Arg-64, and Gly-86. Arg-125 contributes to the ATP binding site. Arg-143 is a substrate binding site.

The protein belongs to the shikimate kinase family. In terms of assembly, monomer. Mg(2+) is required as a cofactor.

Its subcellular location is the cytoplasm. It carries out the reaction shikimate + ATP = 3-phosphoshikimate + ADP + H(+). The protein operates within metabolic intermediate biosynthesis; chorismate biosynthesis; chorismate from D-erythrose 4-phosphate and phosphoenolpyruvate: step 5/7. Catalyzes the specific phosphorylation of the 3-hydroxyl group of shikimic acid using ATP as a cosubstrate. The polypeptide is Shikimate kinase (Oceanobacillus iheyensis (strain DSM 14371 / CIP 107618 / JCM 11309 / KCTC 3954 / HTE831)).